Here is a 264-residue protein sequence, read N- to C-terminus: Acyl-[acyl-carrier-protein]--UDP-N-acetylglucosamine O-acyltransferase (264 aa).

It belongs to the transferase hexapeptide repeat family. LpxA subfamily. In terms of assembly, homotrimer.

It localises to the cytoplasm. The catalysed reaction is a (3R)-hydroxyacyl-[ACP] + UDP-N-acetyl-alpha-D-glucosamine = a UDP-3-O-[(3R)-3-hydroxyacyl]-N-acetyl-alpha-D-glucosamine + holo-[ACP]. It functions in the pathway glycolipid biosynthesis; lipid IV(A) biosynthesis; lipid IV(A) from (3R)-3-hydroxytetradecanoyl-[acyl-carrier-protein] and UDP-N-acetyl-alpha-D-glucosamine: step 1/6. In terms of biological role, involved in the biosynthesis of lipid A, a phosphorylated glycolipid that anchors the lipopolysaccharide to the outer membrane of the cell. The chain is Acyl-[acyl-carrier-protein]--UDP-N-acetylglucosamine O-acyltransferase from Haemophilus ducreyi (strain 35000HP / ATCC 700724).